Consider the following 402-residue polypeptide: Probable tRNA pseudouridine synthase D (402 aa).

Asp-94 (nucleophile) is an active-site residue. A TRUD domain is found at 175 to 364 (YILNYYGTQR…PGTRRKLITK (190 aa)).

It belongs to the pseudouridine synthase TruD family.

It catalyses the reaction uridine(13) in tRNA = pseudouridine(13) in tRNA. Its function is as follows. Could be responsible for synthesis of pseudouridine from uracil-13 in transfer RNAs. In Methanococcus aeolicus (strain ATCC BAA-1280 / DSM 17508 / OCM 812 / Nankai-3), this protein is Probable tRNA pseudouridine synthase D.